Consider the following 43-residue polypeptide: B melanoma antigen 1 (43 aa).

A signal peptide spans 1–17 (MAARAVFLALSAQLLQA).

Belongs to the BAGE family. As to expression, not expressed in normal tissues, except in testis. Expressed with significant proportion in melanomas, but also in tumors of various histological origins, such as bladder carcinomas, head and neck squamous cell carcinomas, lung and breast carcinomas. Not expressed in renal, colorectal and prostatic carcinomas, leukemias and lymphomas. More frequently expressed in metastatic melanomas than in primary melanomas.

It is found in the secreted. Unknown. Antigen recognized on a melanoma by autologous cytolytic T-lymphocytes. In Homo sapiens (Human), this protein is B melanoma antigen 1 (BAGE).